A 151-amino-acid chain; its full sequence is Type 4 adapter protein IcmW (151 aa).

The T4BSS is a complex nanomachine composed of several subcomplexes. This subunit is part of the Type IV Coupling Complex (T4CC), a subcomplex composed of the DotLMNYZ core and the IcmSW-LvgA adapter subunits, linked by the C-terminal tail of DotL. Interacts with IcmS. IcmS and IcmW form a stable complex. Interaction with IcmS greatly enhances the stability of IcmW. Interacts directly with the type 4 coupling protein DotL. Interacts with LvgA. Interacts with effector proteins.

The protein localises to the cytoplasm. Its activity is regulated as follows. Interaction with DotL is critical for the export of IcmSW-dependent substrates. Functionally, component of the Dot/Icm type IVB secretion system (T4BSS), which is used to inject bacterial effector proteins into eukaryotic host cells. Part of a subcomplex which recruits effector proteins and delivers them to the core transmembrane subcomplex. The IcmS/IcmW protein complex plays an important role in protein translocation by interacting with multiple Dot/Icm effector proteins to facilitate their translocation into host cells. Interaction promotes conformational changes in the effector protein, which may facilitate display of a C-terminal translocation signal. May maintain the substrates in a translocation competent form. Required for intracellular growth in host cells, replicative phagosome formation and phagosome trafficking. In Legionella pneumophila subsp. pneumophila (strain Philadelphia 1 / ATCC 33152 / DSM 7513), this protein is Type 4 adapter protein IcmW.